A 279-amino-acid polypeptide reads, in one-letter code: Probable endonuclease 4 (279 aa).

Zn(2+) contacts are provided by histidine 69, histidine 109, glutamate 145, aspartate 179, histidine 182, histidine 216, aspartate 229, histidine 231, and glutamate 261.

Belongs to the AP endonuclease 2 family. Requires Zn(2+) as cofactor.

The enzyme catalyses Endonucleolytic cleavage to 5'-phosphooligonucleotide end-products.. Its function is as follows. Endonuclease IV plays a role in DNA repair. It cleaves phosphodiester bonds at apurinic or apyrimidinic (AP) sites, generating a 3'-hydroxyl group and a 5'-terminal sugar phosphate. The polypeptide is Probable endonuclease 4 (Chlorobium luteolum (strain DSM 273 / BCRC 81028 / 2530) (Pelodictyon luteolum)).